A 299-amino-acid chain; its full sequence is Cysteine synthase B (299 aa).

The residue at position 40 (Lys40) is an N6-(pyridoxal phosphate)lysine. Residues Asn70, Gly174–Thr178, and Ser261 each bind pyridoxal 5'-phosphate.

This sequence belongs to the cysteine synthase/cystathionine beta-synthase family. The cofactor is pyridoxal 5'-phosphate.

The catalysed reaction is O-acetyl-L-serine + hydrogen sulfide = L-cysteine + acetate. It functions in the pathway amino-acid biosynthesis; L-cysteine biosynthesis; L-cysteine from L-serine: step 2/2. The sequence is that of Cysteine synthase B (cysM) from Campylobacter jejuni subsp. jejuni serotype O:2 (strain ATCC 700819 / NCTC 11168).